Reading from the N-terminus, the 201-residue chain is Small ribosomal subunit protein uS4 (201 aa).

A disordered region spans residues 26-47; the sequence is LSKKNYPPGQHGNNRRRKTSEY. The 63-residue stretch at 92–154 folds into the S4 RNA-binding domain; sequence ARLDNVVFRL…SKSLEVIADA (63 aa).

The protein belongs to the universal ribosomal protein uS4 family. Part of the 30S ribosomal subunit. Contacts protein S5. The interaction surface between S4 and S5 is involved in control of translational fidelity.

In terms of biological role, one of the primary rRNA binding proteins, it binds directly to 16S rRNA where it nucleates assembly of the body of the 30S subunit. Its function is as follows. With S5 and S12 plays an important role in translational accuracy. The chain is Small ribosomal subunit protein uS4 from Porphyromonas gingivalis (strain ATCC 33277 / DSM 20709 / CIP 103683 / JCM 12257 / NCTC 11834 / 2561).